A 294-amino-acid polypeptide reads, in one-letter code: Phosphonoacetaldehyde hydrolase (294 aa).

Catalysis depends on aspartate 19, which acts as the Nucleophile. Mg(2+) is bound by residues aspartate 19 and alanine 21. The active-site Schiff-base intermediate with substrate is the lysine 60. Aspartate 193 is a binding site for Mg(2+).

The protein belongs to the HAD-like hydrolase superfamily. PhnX family. In terms of assembly, homodimer. Mg(2+) serves as cofactor.

The enzyme catalyses phosphonoacetaldehyde + H2O = acetaldehyde + phosphate + H(+). Involved in phosphonate degradation. This is Phosphonoacetaldehyde hydrolase from Hahella chejuensis (strain KCTC 2396).